Reading from the N-terminus, the 840-residue chain is Telomere length regulation protein TEL2 homolog (840 aa).

An N-acetylmethionine modification is found at M1. A hydroxyproline mark is found at P374, P419, and P422. Positions 443–497 (PEPAGDCSSVSRGPSPAPVDTESPVEMPEKAVESDVPPTQPQGSDSELDSDDEFI) are disordered. A Phosphoserine modification is found at S457. S486 is modified (phosphoserine; by CK2). Residues S488, S492, and S837 each carry the phosphoserine modification. A compositionally biased stretch (acidic residues) spans 488–497 (SELDSDDEFI).

It belongs to the TEL2 family. In terms of assembly, component of the TTT complex composed of TELO2, TTI1 and TTI2. Interacts with ATM, ATR, MTOR, PRKDC, RUVBL2, TTI1, TTI2, SMG1 and TRRAP. Component of the mTORC1 and mTORC2 complexes. Interacts (phosphorylated form) with PIH1D1. Interaction with PIH1D1 mediates interaction of TELO2 with the R2TP complex composed of RUVBL1, RUVBL2, PIH1D1, and RPAP3. In terms of processing, hydroxylation by PHD3 is required for a proper interaction with ATR, and activation of the ATR/CHK1/p53 pathway following DNA damage. Phosphorylated at Ser-486 by CK2 following growth factor deprivation, leading to its subsequent ubiquitination by the SCF(FBXO9) complex. Phosphorylation by CK2 only takes place when TELO2 is bound to mTORC1, not mTORC2; leading to selective ubiquitination of mTORC1-associated protein. Post-translationally, ubiquitinated by the SCF(FBXO9) complex following phosphorylation by CK2 in response to growth factor deprivation, leading to its degradation by the proteasome. Only mTORC1-associated protein is ubiquitinated and degraded, leading to selective inactivation of mTORC1 to restrain cell growth and protein translation, while mTORC2 is activated due to the relief of feedback inhibition by mTORC1.

The protein localises to the cytoplasm. The protein resides in the membrane. It is found in the nucleus. Its subcellular location is the chromosome. It localises to the telomere. Functionally, regulator of the DNA damage response (DDR). Part of the TTT complex that is required to stabilize protein levels of the phosphatidylinositol 3-kinase-related protein kinase (PIKK) family proteins. The TTT complex is involved in the cellular resistance to DNA damage stresses, like ionizing radiation (IR), ultraviolet (UV) and mitomycin C (MMC). Together with the TTT complex and HSP90 may participate in the proper folding of newly synthesized PIKKs. Promotes assembly, stabilizes and maintains the activity of mTORC1 and mTORC2 complexes, which regulate cell growth and survival in response to nutrient and hormonal signals. May be involved in telomere length regulation. The chain is Telomere length regulation protein TEL2 homolog (Telo2) from Mus musculus (Mouse).